A 473-amino-acid chain; its full sequence is Ribonuclease Y (473 aa).

A helical membrane pass occupies residues 4–24; it reads LIAFIILLILFVLLITIVPVV. The 61-residue stretch at 158–218 folds into the KH domain; sequence SLFNIDIIDE…IRREIARIVM (61 aa). Residues 285–378 enclose the HD domain; that stretch reads ILSHSLEVAE…VKIVDTLSAA (94 aa).

It belongs to the RNase Y family.

The protein localises to the cell membrane. In terms of biological role, endoribonuclease that initiates mRNA decay. The sequence is that of Ribonuclease Y from Ureaplasma parvum serovar 3 (strain ATCC 27815 / 27 / NCTC 11736).